Consider the following 153-residue polypeptide: Ribosome maturation factor RimP (153 aa).

The protein belongs to the RimP family.

It localises to the cytoplasm. Functionally, required for maturation of 30S ribosomal subunits. The protein is Ribosome maturation factor RimP of Clostridium botulinum (strain 657 / Type Ba4).